A 430-amino-acid chain; its full sequence is MLMNNADVRSQERKQVMVCARAAHRVAPIVAQLTSADKNAVLLDAAAALEAAGAEIIAANQRDIDQGRARGLSEALIDRLSLDSARIAGIAGGLRQVAALSDPVGEVVGGSVMPNGMQMRKVRVPLGVMGMVYEARPNVTIDAFGLALKSGNVALLRGSKSAQHSNAALVAVVHRVLESHGLPHEVVQLLPCETHESVQDLITARGLVDVVIPRGGAGLIEAVVTNATVPTIETGTGNCHFYIDRDVSDLDQAIAMLLNGKTRRCSVCNATETVLIDSALDSAYQLAIITALQEAGVTVHGDVAQLEAVGASGIVPADEHDWAEEYLSLDIACALVDGVDAAMEHIRTYSTKHTEAIATGNIVTAQRFADRVDAAAVMINASTAFTDGEQFGMGAEIGISTQKLHARGPMALPELTTTKWIVQGTGQTRP.

It belongs to the gamma-glutamyl phosphate reductase family.

The protein localises to the cytoplasm. The enzyme catalyses L-glutamate 5-semialdehyde + phosphate + NADP(+) = L-glutamyl 5-phosphate + NADPH + H(+). It functions in the pathway amino-acid biosynthesis; L-proline biosynthesis; L-glutamate 5-semialdehyde from L-glutamate: step 2/2. In terms of biological role, catalyzes the NADPH-dependent reduction of L-glutamate 5-phosphate into L-glutamate 5-semialdehyde and phosphate. The product spontaneously undergoes cyclization to form 1-pyrroline-5-carboxylate. This chain is Gamma-glutamyl phosphate reductase, found in Corynebacterium diphtheriae (strain ATCC 700971 / NCTC 13129 / Biotype gravis).